Consider the following 316-residue polypeptide: Pantothenate kinase (316 aa).

95–102 lines the ATP pocket; that stretch reads GSVSVGKS.

Belongs to the prokaryotic pantothenate kinase family.

It is found in the cytoplasm. The enzyme catalyses (R)-pantothenate + ATP = (R)-4'-phosphopantothenate + ADP + H(+). Its pathway is cofactor biosynthesis; coenzyme A biosynthesis; CoA from (R)-pantothenate: step 1/5. This is Pantothenate kinase from Haemophilus ducreyi (strain 35000HP / ATCC 700724).